Here is a 356-residue protein sequence, read N- to C-terminus: Sorbitol dehydrogenase (356 aa).

Position 44 (Cys44) interacts with Zn(2+). Substrate is bound at residue Tyr50. His69 and Glu70 together coordinate Zn(2+). Residue Glu155 participates in substrate binding. 3 residues coordinate NAD(+): Ile183, Asp203, and Arg208. Phosphoserine occurs at positions 210 and 224. NAD(+)-binding positions include 272–274 and 296–298; these read VGL and VFR. The substrate site is built by Arg298 and Tyr299.

Belongs to the zinc-containing alcohol dehydrogenase family. In terms of assembly, homotetramer. Zn(2+) serves as cofactor. As to expression, expressed in lens.

Its subcellular location is the mitochondrion membrane. The protein localises to the cell projection. It localises to the cilium. The protein resides in the flagellum. The enzyme catalyses xylitol + NAD(+) = D-xylulose + NADH + H(+). The catalysed reaction is keto-D-fructose + NADH + H(+) = D-sorbitol + NAD(+). It catalyses the reaction L-iditol + NAD(+) = keto-L-sorbose + NADH + H(+). With respect to regulation, inhibited in vitro by metal chelators such as EDTA and 1,10-phenanthroline. Polyol dehydrogenase that catalyzes the reversible NAD(+)-dependent oxidation of various sugar alcohols. Is mostly active with xylitol, D-sorbitol (D-glucitol) and L-iditol as substrates, leading to the C2-oxidized products D-xylulose, D-fructose and L-sorbose, respectively. Is a key enzyme in the polyol pathway that interconverts glucose and fructose via sorbitol, which constitutes an important alternate route for glucose metabolism. May play a role in sperm motility by using sorbitol as an alternative energy source for sperm motility. Cannot use NADP(+) as the electron acceptor. Has no activity on ethanol, methanol, glycerol, galactitol and fructose 6-phosphate. This chain is Sorbitol dehydrogenase (SORD), found in Bos taurus (Bovine).